The sequence spans 428 residues: 3-phosphoshikimate 1-carboxyvinyltransferase (428 aa).

3-phosphoshikimate contacts are provided by lysine 20, serine 21, and arginine 25. Lysine 20 contacts phosphoenolpyruvate. The phosphoenolpyruvate site is built by glycine 92 and arginine 120. 3-phosphoshikimate-binding residues include serine 166, glutamine 168, aspartate 314, and lysine 341. Glutamine 168 serves as a coordination point for phosphoenolpyruvate. Residue aspartate 314 is the Proton acceptor of the active site. Arginine 345 and arginine 387 together coordinate phosphoenolpyruvate.

Belongs to the EPSP synthase family. As to quaternary structure, monomer.

It is found in the cytoplasm. It carries out the reaction 3-phosphoshikimate + phosphoenolpyruvate = 5-O-(1-carboxyvinyl)-3-phosphoshikimate + phosphate. It functions in the pathway metabolic intermediate biosynthesis; chorismate biosynthesis; chorismate from D-erythrose 4-phosphate and phosphoenolpyruvate: step 6/7. Its function is as follows. Catalyzes the transfer of the enolpyruvyl moiety of phosphoenolpyruvate (PEP) to the 5-hydroxyl of shikimate-3-phosphate (S3P) to produce enolpyruvyl shikimate-3-phosphate and inorganic phosphate. The polypeptide is 3-phosphoshikimate 1-carboxyvinyltransferase (Listeria innocua serovar 6a (strain ATCC BAA-680 / CLIP 11262)).